The sequence spans 143 residues: Cytochrome c-type biogenesis protein CcmE (143 aa).

The Cytoplasmic segment spans residues 1–8; that stretch reads MTPVRRRK. Residues 9–29 traverse the membrane as a helical; Signal-anchor for type II membrane protein segment; that stretch reads LFILLFALSVLSAAAALVLYA. Residues 30-143 are Periplasmic-facing; sequence LRQNISLFYT…KSALADKVKQ (114 aa). Heme contacts are provided by His-124 and Tyr-128.

It belongs to the CcmE/CycJ family.

The protein localises to the cell inner membrane. Its function is as follows. Heme chaperone required for the biogenesis of c-type cytochromes. Transiently binds heme delivered by CcmC and transfers the heme to apo-cytochromes in a process facilitated by CcmF and CcmH. The sequence is that of Cytochrome c-type biogenesis protein CcmE from Legionella pneumophila.